The primary structure comprises 167 residues: Lipoprotein signal peptidase (167 aa).

Helical transmembrane passes span 8-28, 46-66, 70-90, and 101-121; these read TFLTSFLLVSLDWVSKLVVLL, WGHFSFLIVPSFNEGAAFGLF, KIPLLIFRVFVILCLFLFLGI, and IALTLILAGALGNVGDILFHG. Residues D125 and D143 contribute to the active site. A helical transmembrane segment spans residues 139–159; the sequence is FNLADAFISLGTLLLVGHLYF.

It belongs to the peptidase A8 family.

It localises to the cell inner membrane. The enzyme catalyses Release of signal peptides from bacterial membrane prolipoproteins. Hydrolyzes -Xaa-Yaa-Zaa-|-(S,diacylglyceryl)Cys-, in which Xaa is hydrophobic (preferably Leu), and Yaa (Ala or Ser) and Zaa (Gly or Ala) have small, neutral side chains.. The protein operates within protein modification; lipoprotein biosynthesis (signal peptide cleavage). In terms of biological role, this protein specifically catalyzes the removal of signal peptides from prolipoproteins. This Chlamydia muridarum (strain MoPn / Nigg) protein is Lipoprotein signal peptidase.